A 250-amino-acid polypeptide reads, in one-letter code: 3-deoxy-manno-octulosonate cytidylyltransferase 1 (250 aa).

This sequence belongs to the KdsB family.

It localises to the cytoplasm. It catalyses the reaction 3-deoxy-alpha-D-manno-oct-2-ulosonate + CTP = CMP-3-deoxy-beta-D-manno-octulosonate + diphosphate. The protein operates within nucleotide-sugar biosynthesis; CMP-3-deoxy-D-manno-octulosonate biosynthesis; CMP-3-deoxy-D-manno-octulosonate from 3-deoxy-D-manno-octulosonate and CTP: step 1/1. Its pathway is bacterial outer membrane biogenesis; lipopolysaccharide biosynthesis. Functionally, activates KDO (a required 8-carbon sugar) for incorporation into bacterial lipopolysaccharide in Gram-negative bacteria. In Actinobacillus pleuropneumoniae serotype 5b (strain L20), this protein is 3-deoxy-manno-octulosonate cytidylyltransferase 1.